A 375-amino-acid chain; its full sequence is 2-heptyl-3-hydroxy-4(1H)-quinolone synthase (375 aa).

The protein belongs to the 3-hydroxybenzoate 6-hydroxylase family.

It carries out the reaction 2-heptyl-4(1H)-quinolone + NADH + O2 + H(+) = 2-heptyl-3-hydroxy-4(1H)-quinolone + NAD(+) + H2O. Functionally, involved in the degradation pathway of the Pseudomonas aeruginosa quorum sensing signal molecule HHQ (2-heptyl-4(1H)-quinolone) to anthranilate. Catalyzes the hydroxylation of HHQ to PQS (2-heptyl-3-hydroxy-4(1H)-quinolone). The chain is 2-heptyl-3-hydroxy-4(1H)-quinolone synthase from Mycobacteroides abscessus (strain ATCC 19977 / DSM 44196 / CCUG 20993 / CIP 104536 / JCM 13569 / NCTC 13031 / TMC 1543 / L948) (Mycobacterium abscessus).